The following is a 558-amino-acid chain: Xylulose kinase 2 (558 aa).

Substrate contacts are provided by residues aspartate 16, 20–23 (QSMK), serine 111, and aspartate 283. ATP contacts are provided by residues threonine 305 and 456–460 (GASAN).

The protein belongs to the FGGY kinase family. The cofactor is a divalent metal cation.

It is found in the cytoplasm. The catalysed reaction is D-xylulose + ATP = D-xylulose 5-phosphate + ADP + H(+). It participates in isoprenoid biosynthesis; carotenoid biosynthesis. Repressed by oxo-clomazone (keto-clomazone), a bleaching herbicide. Functionally, mediates 1-deoxy-D-xylulose (DX) phosphorylation in the cytoplasm prior to the translocation of 1-deoxy-D-xylulose 5-phosphate into plastids. Can also phosphorylate D-xylulose (Xyl). Uses preferentially ATP as cosubstrate. This Arabidopsis thaliana (Mouse-ear cress) protein is Xylulose kinase 2.